We begin with the raw amino-acid sequence, 414 residues long: MKFVVASYGTRGDIEPCAAVGLELQRRGHDVCLAVPPNLIGFVETAGLSAVAYGSRDSQEQLDEQFLHNAWKLQNPIKLLREAMAPVTEGWAELSAMLTPVAAGADLLLTGQIYQEVVANVAEHHGIPLAALHFYPVRANGEIAFPARLPAPLVRSTITAIDWLYWRMTKGVEDAQRRELGLPKASTPAPRRMAVRGSLEIQAYDALCFPGLAAEWGGRRPFVGALTMESATDADDEVASWIAADTPPIYFGFGSMPIGSLADRVAMISAACAELGERALICSGPSDATGIPQFDHVKVVRVVSHAAVFPTCRAVVHHGGAGTTAAGLRAGIPTLILWVTSDQPIWAAQIKQLKVGRGRRFSSATKESLIADLRTILAPDYVTRAREIASRMTKPAASVTATADLLEDAARRAR.

The protein belongs to the glycosyltransferase 28 family.

This is an uncharacterized protein from Mycobacterium tuberculosis (strain CDC 1551 / Oshkosh).